The sequence spans 527 residues: MHDKILILDFGSQVTQLIARRIREAHVLSEIHPHDVSDEFIRDFKPTGIILSGGPNSVTETDTPRAPQAVFEAGVPVLGICYGMQTMAEQLGGKVDSGHLREFGYAEVRARNHTSFLDGIQDFATPEGHGMLKVWMSHGDKVLEMPQGFQLMASTESCPIAAMADETRHFYGVQWHPEVTHTVQGRAMLERFVLKICGAKPDWEMGNYIDEAVENIRKQVGDEHVILGLSGGVDSSVAAALLHRAIGDQLTCVFVDHGLLRLNEAEQVMSMFADNLGVKVIHVDASEAFMSKLKGVTDPEAKRKIIGAEFVEVFQTEAGKLTDAKWLAQGTIYPDVIESAGKGKKAAHTIKSHHNVGGLPETLNLKLLEPLRELFKDEVRELGVKLGLPPSMVYRHPFPGPGLGVRILGEVKREYADLLRRADAIFIESLRTFIDKDTDKSWYDLTSQAFAVFLPVKSVGVMGDGRTYEYVVALRAVQTLDFMTAHWAHLPHDLLGHVSNRIINEVRGINRVVYDISGKPPATIEWE.

Residues 4–202 form the Glutamine amidotransferase type-1 domain; sequence KILILDFGSQ…VLKICGAKPD (199 aa). Cysteine 81 serves as the catalytic Nucleophile. Catalysis depends on residues histidine 176 and glutamate 178. The GMPS ATP-PPase domain occupies 203 to 395; that stretch reads WEMGNYIDEA…LGLPPSMVYR (193 aa). 230–236 is a binding site for ATP; it reads SGGVDSS.

As to quaternary structure, homodimer.

It carries out the reaction XMP + L-glutamine + ATP + H2O = GMP + L-glutamate + AMP + diphosphate + 2 H(+). It functions in the pathway purine metabolism; GMP biosynthesis; GMP from XMP (L-Gln route): step 1/1. Catalyzes the synthesis of GMP from XMP. In Paraburkholderia phymatum (strain DSM 17167 / CIP 108236 / LMG 21445 / STM815) (Burkholderia phymatum), this protein is GMP synthase [glutamine-hydrolyzing].